The primary structure comprises 1271 residues: ATP-dependent helicase/nuclease subunit A (1271 aa).

The UvrD-like helicase ATP-binding domain occupies 3-476 (TKWTEEQELA…IMLYKNFRSR (474 aa)). 24–31 (AAAGSGKT) contributes to the ATP binding site. The region spanning 528-824 (IENLKVAGDI…RIMSIHKSKG (297 aa)) is the UvrD-like helicase C-terminal domain.

Belongs to the helicase family. AddA subfamily. As to quaternary structure, heterodimer of AddA and AddB/RexB. Mg(2+) is required as a cofactor.

It carries out the reaction Couples ATP hydrolysis with the unwinding of duplex DNA by translocating in the 3'-5' direction.. It catalyses the reaction ATP + H2O = ADP + phosphate + H(+). Functionally, the heterodimer acts as both an ATP-dependent DNA helicase and an ATP-dependent, dual-direction single-stranded exonuclease. Recognizes the chi site generating a DNA molecule suitable for the initiation of homologous recombination. The AddA nuclease domain is required for chi fragment generation; this subunit has the helicase and 3' -&gt; 5' nuclease activities. The chain is ATP-dependent helicase/nuclease subunit A from Clostridium perfringens (strain ATCC 13124 / DSM 756 / JCM 1290 / NCIMB 6125 / NCTC 8237 / Type A).